The sequence spans 842 residues: MGFLTKIVDGNKREIKRLSKQADKVISLEEEMSILTDEEIRNKTKAFQERLQAEEDVSKQDKILEEILPEAFALVREGAKRVFNMTPYPVQIMGGIAIHNGDISEMRTGEGKTLTATMPTYLNALAGRGVHVITVNEYLASSQSEEMAELYNFLGLSVGLNLNSLSTEQKREAYNADITYSTNNELGFDYLRDNMVNYSEERVMRPLHFAIIDEVDSILIDEARTPLIISGEAEKSTSLYTQANVFAKMLKAEDDYNYDEKTKSVQLTDQGADKAERMFKLDNLYDLKNVDIITHINTALRANYTLQRDVDYMVVDGEVLIVDQFTGRTMPGRRFSEGLHQAIEAKEGVQIQNESKTMASITFQNYFRMYNKLAGMTGTAKTEEEEFRNIYNMTVTQIPTNRPVQREDRPDLIFISQKGKFDAVVEDVVEKHKKGQPILLGTVAVETSEYISQLLKKRGVRHDVLNAKNHEREAEIVSTAGQKGAVTIATNMAGRGTDIKLGEGVEELGGLAVIGTERHESRRIDDQLRGRSGRQGDRGESRFYLSLQDELMVRFGSERLQKMMGRLGMDDSTPIESKMVSRAVESAQKRVEGNNFDARKRILEYDEVLRKQREIIYGERNNIIDSESSSELVITMIRSTLDRAISYYVNEELEEIDYAPFINFVEDVFLHEGEVKEDEIKGKDREDIFDTVWAKIEKAYEAQKANIPDQFNEFERMILLRSIDGRWTDHIDTMDQLRQGIHLRSYGQQNPLRDYQNEGHQLFDTMMVNIEEDVSKYILKSIITVDDDIERDKAKEYQGQHVSAEDGKEKVKPQPVVKDNHIGRNDPCPCGSGKKYKNCCGK.

Residues Gln91, Gly109 to Thr113, and Asp498 each bind ATP. Residues Gln798–Arg824 show a composition bias toward basic and acidic residues. Residues Gln798 to Pro827 are disordered. Positions 828, 830, 839, and 840 each coordinate Zn(2+).

The protein belongs to the SecA family. As to quaternary structure, monomer and homodimer. Part of the essential Sec protein translocation apparatus which comprises SecA, SecYEG and auxiliary proteins SecDF. Other proteins may also be involved. Zn(2+) serves as cofactor.

Its subcellular location is the cell membrane. The protein localises to the cytoplasm. It catalyses the reaction ATP + H2O + cellular proteinSide 1 = ADP + phosphate + cellular proteinSide 2.. Functionally, part of the Sec protein translocase complex. Interacts with the SecYEG preprotein conducting channel. Has a central role in coupling the hydrolysis of ATP to the transfer of proteins into and across the cell membrane, serving as an ATP-driven molecular motor driving the stepwise translocation of polypeptide chains across the membrane. In Staphylococcus carnosus (strain TM300), this protein is Protein translocase subunit SecA.